The chain runs to 451 residues: Tubulin alpha chain (451 aa).

Glutamine 11 is a binding site for GTP. Residue lysine 40 is modified to N6-acetyllysine. Positions 71, 144, 145, 179, 206, and 228 each coordinate GTP. Glutamate 71 provides a ligand contact to Mg(2+). The active site involves glutamate 254.

This sequence belongs to the tubulin family. In terms of assembly, dimer of alpha and beta chains. A typical microtubule is a hollow water-filled tube with an outer diameter of 25 nm and an inner diameter of 15 nM. Alpha-beta heterodimers associate head-to-tail to form protofilaments running lengthwise along the microtubule wall with the beta-tubulin subunit facing the microtubule plus end conferring a structural polarity. Microtubules usually have 13 protofilaments but different protofilament numbers can be found in some organisms and specialized cells. Mg(2+) is required as a cofactor. Undergoes a tyrosination/detyrosination cycle, the cyclic removal and re-addition of a C-terminal tyrosine residue by the enzymes tubulin tyrosine carboxypeptidase (TTCP) and tubulin tyrosine ligase (TTL), respectively. In terms of processing, acetylation of alpha chains at Lys-40 stabilizes microtubules and affects affinity and processivity of microtubule motors. This modification has a role in multiple cellular functions, ranging from cell motility, cell cycle progression or cell differentiation to intracellular trafficking and signaling.

It is found in the cytoplasm. It localises to the cytoskeleton. The enzyme catalyses GTP + H2O = GDP + phosphate + H(+). Its function is as follows. Tubulin is the major constituent of microtubules, a cylinder consisting of laterally associated linear protofilaments composed of alpha- and beta-tubulin heterodimers. Microtubules grow by the addition of GTP-tubulin dimers to the microtubule end, where a stabilizing cap forms. Below the cap, tubulin dimers are in GDP-bound state, owing to GTPase activity of alpha-tubulin. This Chlorella vulgaris (Green alga) protein is Tubulin alpha chain (TUBA).